The following is a 439-amino-acid chain: Proline--tRNA ligase (439 aa).

Belongs to the class-II aminoacyl-tRNA synthetase family. ProS type 2 subfamily. In terms of assembly, homodimer.

It is found in the cytoplasm. It carries out the reaction tRNA(Pro) + L-proline + ATP = L-prolyl-tRNA(Pro) + AMP + diphosphate. Functionally, catalyzes the attachment of proline to tRNA(Pro) in a two-step reaction: proline is first activated by ATP to form Pro-AMP and then transferred to the acceptor end of tRNA(Pro). The sequence is that of Proline--tRNA ligase from Rhodopseudomonas palustris (strain HaA2).